Here is a 986-residue protein sequence, read N- to C-terminus: Probable serine/threonine-protein kinase DDB_G0272092 (986 aa).

The C2 domain occupies 1–107 (MARKIGSVRI…EYIVDTTKWY (107 aa)). Positions 22, 28, 76, 78, 81, and 84 each coordinate Ca(2+). ANK repeat units lie at residues 137–167 (PEKSPFIKAIKDNDTQAIELMMNKAKLDYTI), 171–201 (EGTPAIHIAAASNNIPLITMLLKGSDARVSI), 205–238 (HGNTPLHLFVQKNVSLNCEDIINKLIERGCGIND), 242–274 (LGETALHKACLATVVQKTTIVEQLLQKGAIINH), 278–307 (TRDTPLHYAIKVGKVEFVRFFLQNGANVMI), and 312–344 (PSRTPLELAKELGNPQIISKVEKVIEISDWLNE). The SAM domain occupies 333 to 396 (EKVIEISDWL…LRAVRKIKDP (64 aa)). A compositionally biased stretch (low complexity) spans 412–438 (HVENDNNNNNNNNNNNNNSQEQCNINN). Disordered regions lie at residues 412–520 (HVEN…SNTT) and 532–574 (TTLT…PEGP). Over residues 439 to 448 (DSLGSGNRNS) the composition is skewed to polar residues. Residues 454–464 (QNQNNTLNNNN) show a composition bias toward low complexity. Polar residues predominate over residues 465–476 (VESKSTGNLNSL). 2 stretches are compositionally biased toward low complexity: residues 493-520 (NILSPNPIPASSSAPAAPSPVAIGSNTT) and 546-571 (TESTTPPQQQQQTTTITPTKTTTVTP). One can recognise a Protein kinase domain in the interval 601–870 (LTYNVLLGTG…ELLKIRDEYN (270 aa)). Residues 607–615 (LGTGASGKV) and lysine 628 each bind ATP. The active-site Proton acceptor is the aspartate 722. Low complexity-rich tracts occupy residues 901 to 913 (DSNNINNNNNNNN) and 928 to 947 (SNSNLLNNNNNNNNNDSDNN). Positions 901-986 (DSNNINNNNN…SPMEPKSIKK (86 aa)) are disordered. 2 stretches are compositionally biased toward polar residues: residues 948-959 (ISEPATTDSITK) and 969-978 (LTRTRSSSSP).

It belongs to the protein kinase superfamily. TKL Ser/Thr protein kinase family. Requires Ca(2+) as cofactor.

The enzyme catalyses L-seryl-[protein] + ATP = O-phospho-L-seryl-[protein] + ADP + H(+). It carries out the reaction L-threonyl-[protein] + ATP = O-phospho-L-threonyl-[protein] + ADP + H(+). This Dictyostelium discoideum (Social amoeba) protein is Probable serine/threonine-protein kinase DDB_G0272092.